The chain runs to 93 residues: YcgL domain-containing protein VSAL_I1068 (93 aa).

A YcgL domain is found at 1–84; that stretch reads MYCSIYKSSK…PPENLLEKYK (84 aa).

The polypeptide is YcgL domain-containing protein VSAL_I1068 (Aliivibrio salmonicida (strain LFI1238) (Vibrio salmonicida (strain LFI1238))).